Consider the following 306-residue polypeptide: uncharacterized protein (306 aa).

Asp-204 functions as the Proton acceptor in the catalytic mechanism.

The protein belongs to the aminoglycoside phosphotransferase family.

This is an uncharacterized protein from Bacillus subtilis (strain 168).